The chain runs to 559 residues: Potassium-transporting ATPase potassium-binding subunit (559 aa).

The next 12 membrane-spanning stretches (helical) occupy residues 5–25, 63–83, 131–151, 173–193, 254–274, 282–302, 327–347, 356–376, 379–399, 416–436, 483–503, and 525–545; these read GFLLLASYLLVLLVLARPLGT, LLAILLFNALGGLALFALLML, VGLTVQNFLSAATGIAVVFAL, ITLWLLLPLSLLVALFFIQQG, VQMLAIFLIPAALCFAFGEVV, AILWAMTLIFILCVAVVMWAE, FGILASSLFAVITTAASCGAV, ALGGMVPMWLMQIGEVVFGGV, GLYGMLLFVMLAVFIAGLMVG, MIALAILVTPTLVLLGTALAM, LLLAFCMLVGRFAVIIPVMAI, and ALFIGLLIGTVLLVGALTFIP.

This sequence belongs to the KdpA family. The system is composed of three essential subunits: KdpA, KdpB and KdpC.

The protein resides in the cell inner membrane. In terms of biological role, part of the high-affinity ATP-driven potassium transport (or Kdp) system, which catalyzes the hydrolysis of ATP coupled with the electrogenic transport of potassium into the cytoplasm. This subunit binds the periplasmic potassium ions and delivers the ions to the membrane domain of KdpB through an intramembrane tunnel. The sequence is that of Potassium-transporting ATPase potassium-binding subunit from Klebsiella pneumoniae (strain 342).